A 554-amino-acid polypeptide reads, in one-letter code: Phospho-2-dehydro-3-deoxyheptonate aldolase 1, chloroplastic (554 aa).

The transit peptide at 1 to 39 directs the protein to the chloroplast; that stretch reads MSLATSSSMAGGAAVVPRSATATTASAFVTMKRRATAVR. Residues 41-70 form a disordered region; sequence VHAAEPSKNPPVGVPSAAKTSSPSVAAPEK.

It belongs to the class-II DAHP synthase family.

The protein localises to the plastid. It localises to the chloroplast. The catalysed reaction is D-erythrose 4-phosphate + phosphoenolpyruvate + H2O = 7-phospho-2-dehydro-3-deoxy-D-arabino-heptonate + phosphate. It functions in the pathway metabolic intermediate biosynthesis; chorismate biosynthesis; chorismate from D-erythrose 4-phosphate and phosphoenolpyruvate: step 1/7. The sequence is that of Phospho-2-dehydro-3-deoxyheptonate aldolase 1, chloroplastic (DAHPS1) from Oryza sativa subsp. japonica (Rice).